Here is a 1013-residue protein sequence, read N- to C-terminus: Retinoblastoma-related protein 1 (1013 aa).

The tract at residues 406 to 607 (TPVSTAMTTA…EKGSSMYNSL (202 aa)) is domain A. Residues 406–858 (TPVSTAMTTA…NEIFIPAVKP (453 aa)) form a pocket region. The interval 608–727 (IVARPSLALE…PGGGGETCAE (120 aa)) is spacer. The segment at 728-858 (TGINIFFTKI…NEIFIPAVKP (131 aa)) is domain B. Phosphoserine occurs at positions 885 and 898. The tract at residues 979–1013 (VANSLNLQNQNQNQNGSDASSSGGAAPLKTEPTDS) is disordered. Over residues 980-1004 (ANSLNLQNQNQNQNGSDASSSGGAA) the composition is skewed to low complexity.

This sequence belongs to the retinoblastoma protein (RB) family. In terms of assembly, interacts with the begomovirus replication-associated protein (Rep), the nanovirus Clink protein, the mastrevirus RepA protein, E2FA, E2FB and E2FC. Interacts with MSI1 through its Domain A. Interacts with ATPK1/S6K1. Interacts with SCR. Interacts with HAT2. Interacts with FAMA. Interacts with MYB124 and MYB88. Component of a DREAM-like complex which modulates a variety of developmentally regulated genes and of the mitotic genes in proliferating and differentiated cells. Associates with MYB3R3 in both earlier and later stages of leaves development. Interacts with MYB3R4 only at early stages of leaves development. Highly phosphorylated by CDKA-1 during G1 to S phase transition. Once hyper-phosphorylated, becomes inactive and unable to interact with E2F. Post-translationally, ubiquitinated. Subject to proteasome-dependent degradation during sucrose starvation. Expressed in actively dividing cells. Detected in the shoot apical meristem, in young leaf primordia and in both sporophytic tissue and the megagametophyte.

Its subcellular location is the nucleus. Functionally, key regulator of entry into cell division. Acts as a transcription repressor of E2F target genes, whose activity is required for progress from the G1 to the S phase of the cell cycle. Hyperphosphorylation by CDKA-1 prevents the binding to E2F transcription factors, allowing G1 to S phase transition to operate. Forms a stable complex with E2FA that functions in maintaining cell proliferation through repression of cell differentiation. Plays a central role in the mechanism controlling meristem cell differentiation, cell fate establishment and cell fate maintenance during organogenesis and gametogenesis. Required during lateral organ production. Also involved in controlling asymmetric divisions of stem cells in different stem cell niches. Acts as a negative regulator of cell proliferation during leaf and gametophytes development. At later stages of development, restricts the progression through additional endocycles. In the leaf, plays a role in the control of the mesophyll differentiation. Another role is its implication in the regulation of imprinted genes. Acts together with MSI1 to repress the expression of MET1 during gametogenesis. This in turn activates expression of the imprinted genes FIS2 and FWA. Regulates many genes of the polycomb repressive complex 2 (PRC2). Plays an important role in meiosis affecting different aspects of this complex process. Functions as a positive regulator of the developmental switch from embryonic heterotrophic growth to autotrophic growth. Interaction with mastrevirus RepA or nanovirus Clink protein disrupts the RBR/E2F interaction and releases the transcription of replicative enzymes needed by the virus by increasing the E2F DNA-binding activity. The chain is Retinoblastoma-related protein 1 (RBR1) from Arabidopsis thaliana (Mouse-ear cress).